We begin with the raw amino-acid sequence, 94 residues long: Integration host factor subunit beta (94 aa).

It belongs to the bacterial histone-like protein family. As to quaternary structure, heterodimer of an alpha and a beta chain.

This protein is one of the two subunits of integration host factor, a specific DNA-binding protein that functions in genetic recombination as well as in transcriptional and translational control. The chain is Integration host factor subunit beta (ihfB) from Pasteurella multocida (strain Pm70).